The sequence spans 187 residues: Pyridoxal 5'-phosphate synthase subunit PdxT (187 aa).

47–49 is a binding site for L-glutamine; sequence GES. Catalysis depends on Cys-76, which acts as the Nucleophile. L-glutamine contacts are provided by residues Arg-102 and 128–129; that span reads IR. Active-site charge relay system residues include His-165 and Glu-167.

This sequence belongs to the glutaminase PdxT/SNO family. In the presence of PdxS, forms a dodecamer of heterodimers. Only shows activity in the heterodimer.

It catalyses the reaction aldehydo-D-ribose 5-phosphate + D-glyceraldehyde 3-phosphate + L-glutamine = pyridoxal 5'-phosphate + L-glutamate + phosphate + 3 H2O + H(+). The catalysed reaction is L-glutamine + H2O = L-glutamate + NH4(+). It participates in cofactor biosynthesis; pyridoxal 5'-phosphate biosynthesis. In terms of biological role, catalyzes the hydrolysis of glutamine to glutamate and ammonia as part of the biosynthesis of pyridoxal 5'-phosphate. The resulting ammonia molecule is channeled to the active site of PdxS. This chain is Pyridoxal 5'-phosphate synthase subunit PdxT, found in Methanococcus vannielii (strain ATCC 35089 / DSM 1224 / JCM 13029 / OCM 148 / SB).